The sequence spans 538 residues: Syncytin-2 (538 aa).

The first 15 residues, 1 to 15 (MGLLLLVLILTPLLA), serve as a signal peptide directing secretion. The Extracellular portion of the chain corresponds to 31 to 478 (LLQSTGSPYS…GWLNWEGTWK (448 aa)). The short motif at 43 to 46 (CWLC) is the CXXC element. 3 disulfides stabilise this stretch: C43–C46, C43–C439, and C431–C438. N-linked (GlcNAc...) asparagine glycans are attached at residues N133, N146, N177, N220, N241, N247, N312, and N332. A fusion peptide region spans residues 354–374 (FIPLLAGLGILAGTGTGIAGI). A CKS-17 motif is present at residues 414–430 (LQNRRGLDMLTAAQGGI). Positions 431 to 439 (CLALDEKCC) match the CX6CC motif. N443 carries an N-linked (GlcNAc...) asparagine glycan. Residues 479–499 (WFSWVLPFIGPFVSLLLLLLF) form a helical membrane-spanning segment. Residues 500–538 (GPCLLNLITQFVSSRLQAIKLQTNLSAGRRPRTIQESPF) are Cytoplasmic-facing.

The protein belongs to the gamma type-C retroviral envelope protein family. HERV class-I FRD env subfamily. The surface and transmembrane proteins form a heterodimer. They are attached by non-covalent interactions or by a labile interchain disulfide bond. Post-translationally, specific enzymatic cleavages in vivo yield the mature SU and TM proteins. The CXXC motif is highly conserved across a broad range of retroviral envelope proteins. It is thought to participate in the formation of a labile disulfide bond possibly with the CX6CC motif present in the transmembrane protein.

It localises to the cell membrane. Functionally, this endogenous retroviral envelope protein has retained its original fusogenic properties and participates in trophoblast fusion and the formation of a syncytium during placenta morphogenesis. The interaction with MFSD2A is apparently important for this process. In terms of biological role, endogenous envelope proteins may have kept, lost or modified their original function during evolution and this one is unable to confer infectivity. This is Syncytin-2 (ERVFRD-1) from Hylobates moloch (Silvery gibbon).